Consider the following 112-residue polypeptide: Nitrogenase-stabilizing/protective protein NifW (112 aa).

This sequence belongs to the NifW family. As to quaternary structure, homotrimer; associates with NifD.

Functionally, may protect the nitrogenase Fe-Mo protein from oxidative damage. This chain is Nitrogenase-stabilizing/protective protein NifW, found in Burkholderia vietnamiensis (strain G4 / LMG 22486) (Burkholderia cepacia (strain R1808)).